The sequence spans 163 residues: Nucleotide-binding protein Bcer98_0876 (163 aa).

This sequence belongs to the YajQ family.

Functionally, nucleotide-binding protein. In Bacillus cytotoxicus (strain DSM 22905 / CIP 110041 / 391-98 / NVH 391-98), this protein is Nucleotide-binding protein Bcer98_0876.